The following is a 437-amino-acid chain: Probable exopolygalacturonase C (437 aa).

The first 21 residues, 1–21 (MLITKTAFLAFLLSSVPLAHG), serve as a signal peptide directing secretion. Residues Asn25, Asn42, Asn82, Asn99, and Asn149 are each glycosylated (N-linked (GlcNAc...) asparagine). PbH1 repeat units follow at residues 215 to 236 (GTNIRISDSIMYNGDDAIAVGS) and 238 to 259 (SHNIVFERNTIGYQSHGMSIGS). The active-site Proton donor is the Asp229. Residue His253 is part of the active site. Asn269 carries N-linked (GlcNAc...) asparagine glycosylation. PbH1 repeat units lie at residues 270 to 291 (ITNLRFEDVTVIDALYAARFKS) and 299 to 320 (VKNVTWKNIRVYNVTFPIFVTQ). N-linked (GlcNAc...) asparagine glycans are attached at residues Asn301 and Asn311. An intrachain disulfide couples Cys386 to Cys392. N-linked (GlcNAc...) asparagine glycans are attached at residues Asn428 and Asn431.

The protein belongs to the glycosyl hydrolase 28 family.

The protein localises to the secreted. It carries out the reaction [(1-&gt;4)-alpha-D-galacturonosyl](n) + H2O = alpha-D-galacturonate + [(1-&gt;4)-alpha-D-galacturonosyl](n-1). Its function is as follows. Specific in hydrolyzing the terminal glycosidic bond of polygalacturonic acid and oligogalacturonates. In Aspergillus flavus (strain ATCC 200026 / FGSC A1120 / IAM 13836 / NRRL 3357 / JCM 12722 / SRRC 167), this protein is Probable exopolygalacturonase C (pgxC).